The primary structure comprises 257 residues: uncharacterized protein (257 aa).

A Phosphoserine modification is found at S127. Disordered regions lie at residues 146 to 174 (HEDPKPSSTYNSSISAPPEDFKQDGEDDG) and 210 to 231 (AREKATELKQRRQEQATNRREK). The segment covering 151–160 (PSSTYNSSIS) has biased composition (polar residues). The stretch at 196–257 (HVRMVREVHE…QQQQEDEQKT (62 aa)) forms a coiled coil.

This is an uncharacterized protein from Arabidopsis thaliana (Mouse-ear cress).